The primary structure comprises 169 residues: MAHCFFDMTIGGQPAGRIIMELFPDVPKTAENFRALCTGEKGIGPSGKKMTYEGSVFHRVIPKFMLQGGDFTLGNGRGGESIYGAKFADENFIHKHTTPGLLSMANAGPGTNGSQFFITTVATPHLDGKHVVFGKVVEGMDVVRKIEATQTDRGDKPLSEVKIAKCGQL.

The PPIase cyclophilin-type domain maps to 5-168; that stretch reads FFDMTIGGQP…SEVKIAKCGQ (164 aa).

The protein belongs to the cyclophilin-type PPIase family.

It localises to the cytoplasm. It carries out the reaction [protein]-peptidylproline (omega=180) = [protein]-peptidylproline (omega=0). Binds cyclosporin A (CsA). CsA mediates some of its effects via an inhibitory action on PPIase. PPIases accelerate the folding of proteins. It catalyzes the cis-trans isomerization of proline imidic peptide bonds in oligopeptides. The sequence is that of Peptidyl-prolyl cis-trans isomerase from Unspecified eudicot DB-1992.